A 944-amino-acid polypeptide reads, in one-letter code: Thyroid peroxidase (944 aa).

An N-terminal signal peptide occupies residues 1–30 (MVGLVPAGSAWGGRALAVLGVTLLVALARG). The Extracellular segment spans residues 31-858 (LLPFFLGGRD…SGRLPKASLV (828 aa)). Asn-141 is a glycosylation site (N-linked (GlcNAc...) asparagine). Cys-154 and Cys-170 form a disulfide bridge. Residue Asp-250 participates in heme b binding. Catalysis depends on His-251, which acts as the Proton acceptor. Asp-252 serves as a coordination point for Ca(2+). 2 cysteine pairs are disulfide-bonded: Cys-271/Cys-281 and Cys-275/Cys-295. Asn-316 is a glycosylation site (N-linked (GlcNAc...) asparagine). 4 residues coordinate Ca(2+): Thr-330, Phe-332, Asp-334, and Ser-336. Residue Asn-351 is glycosylated (N-linked (GlcNAc...) asparagine). Glu-408 and His-503 together coordinate heme b. 7 disulfide bridges follow: Cys-606–Cys-663, Cys-704–Cys-729, Cys-750–Cys-790, Cys-776–Cys-802, Cys-808–Cys-822, Cys-816–Cys-831, and Cys-833–Cys-846. N-linked (GlcNAc...) asparagine glycosylation is present at Asn-623. The region spanning 748 to 804 (DACGLPDSLDNGDVVLCGEAGRRVLVFSCRHGFKLQGPEQVACSPRGGAVRAPVCRD) is the Sushi domain. The 44-residue stretch at 804-847 (DINECEDASHPPCHGSARCRNTKGGFRCECTDPAVLGEDGTTCV) folds into the EGF-like; calcium-binding domain. Residues 859–879 (SIALGIVLVVGLAGLTWTLVC) traverse the membrane as a helical segment. At 880–944 (RWAHAGRKAS…RSHVAQGSPA (65 aa)) the chain is on the cytoplasmic side. The interval 895–944 (LGGRGAPPPGRGAGQDGASGSLVPPLGPQGRTRAVDPTSSRSHVAQGSPA) is disordered. Residues 931 to 944 (PTSSRSHVAQGSPA) show a composition bias toward polar residues.

It belongs to the peroxidase family. XPO subfamily. In terms of assembly, interacts with DUOX1, DUOX2 and CYBA. It depends on Ca(2+) as a cofactor. Requires heme b as cofactor. Heme is covalently bound through a H(2)O(2)-dependent autocatalytic process. Heme insertion is important for the delivery of protein at the cell surface. In terms of processing, cleaved in its N-terminal part.

It localises to the membrane. The catalysed reaction is 2 iodide + H2O2 + 2 H(+) = diiodine + 2 H2O. It catalyses the reaction [thyroglobulin]-L-tyrosine + iodide + H2O2 + H(+) = [thyroglobulin]-3-iodo-L-tyrosine + 2 H2O. It carries out the reaction [thyroglobulin]-3-iodo-L-tyrosine + iodide + H2O2 + H(+) = [thyroglobulin]-3,5-diiodo-L-tyrosine + 2 H2O. The enzyme catalyses 2 [thyroglobulin]-3,5-diiodo-L-tyrosine + H2O2 = [thyroglobulin]-L-thyroxine + [thyroglobulin]-dehydroalanine + 2 H2O. The catalysed reaction is [thyroglobulin]-3-iodo-L-tyrosine + [thyroglobulin]-3,5-diiodo-L-tyrosine + H2O2 = [thyroglobulin]-3,3',5-triiodo-L-thyronine + [thyroglobulin]-dehydroalanine + 2 H2O. It functions in the pathway hormone biosynthesis; thyroid hormone biosynthesis. Its function is as follows. Iodination and coupling of the hormonogenic tyrosines in thyroglobulin to yield the thyroid hormones T(3) and T(4). The polypeptide is Thyroid peroxidase (TPO) (Canis lupus familiaris (Dog)).